Here is a 124-residue protein sequence, read N- to C-terminus: MARFLSILLCFAMATGLAAGIRYPDRVLGRCSTHDLSKMEIDTNLDGVYSPHRSFCTCGSGEVYFTAKDRRNHSNYRVYVCGMPTEFCTAENPVRDPKKGNRWLQCRCRQYKMVIYRDWLVLCE.

Positions 1-20 (MARFLSILLCFAMATGLAAG) are cleaved as a signal peptide. Positions 21-99 (IRYPDRVLGR…AENPVRDPKK (79 aa)) are excised as a propeptide.

In terms of processing, contain 2 disulfide bonds. As to expression, expressed by the venom duct.

Its subcellular location is the secreted. Probable neurotoxin. This chain is Conotoxin Im14.2, found in Conus imperialis (Imperial cone).